Here is a 197-residue protein sequence, read N- to C-terminus: dTTP/UTP pyrophosphatase (197 aa).

Catalysis depends on D70, which acts as the Proton acceptor.

It belongs to the Maf family. YhdE subfamily. It depends on a divalent metal cation as a cofactor.

The protein resides in the cytoplasm. It carries out the reaction dTTP + H2O = dTMP + diphosphate + H(+). It catalyses the reaction UTP + H2O = UMP + diphosphate + H(+). Nucleoside triphosphate pyrophosphatase that hydrolyzes dTTP and UTP. May have a dual role in cell division arrest and in preventing the incorporation of modified nucleotides into cellular nucleic acids. This is dTTP/UTP pyrophosphatase from Pectobacterium atrosepticum (strain SCRI 1043 / ATCC BAA-672) (Erwinia carotovora subsp. atroseptica).